The chain runs to 343 residues: Glyceraldehyde-3-phosphate dehydrogenase (343 aa).

NAD(+) contacts are provided by residues 13-14 (TI) and glycine 111. 140–142 (SCN) is a binding site for D-glyceraldehyde 3-phosphate. Cysteine 141 acts as the Nucleophile in catalysis. Arginine 169 is an NAD(+) binding site. 195–196 (HA) contacts D-glyceraldehyde 3-phosphate. Residue glutamine 303 participates in NAD(+) binding.

Belongs to the glyceraldehyde-3-phosphate dehydrogenase family. In terms of assembly, homotetramer.

It localises to the cytoplasm. The catalysed reaction is D-glyceraldehyde 3-phosphate + phosphate + NADP(+) = (2R)-3-phospho-glyceroyl phosphate + NADPH + H(+). The enzyme catalyses D-glyceraldehyde 3-phosphate + phosphate + NAD(+) = (2R)-3-phospho-glyceroyl phosphate + NADH + H(+). The protein operates within carbohydrate degradation; glycolysis; pyruvate from D-glyceraldehyde 3-phosphate: step 1/5. The polypeptide is Glyceraldehyde-3-phosphate dehydrogenase (Sulfolobus acidocaldarius (strain ATCC 33909 / DSM 639 / JCM 8929 / NBRC 15157 / NCIMB 11770)).